The following is a 569-amino-acid chain: Acyl-CoA transferase FVEG_12629 (569 aa).

The protein belongs to the CoA-transferase III family.

In terms of biological role, acyl-CoA transferase; part of the Fusarium detoxification of benzoxazolinone cluster 2 (FDB2) involved in the degradation of benzoxazolinones produced by the host plant. Maize, wheat, and rye produce the 2 benzoxazinone phytoanticipins 2,4-dihy-droxy-7-methoxy-1,4-benzoxazin-3-one (DIMBOA) and 2,4-dihydroxy-1,4-benzoxazin-3-one (DIBOA) that, due to their inherent instability once released, spontaneously degrade to the more stable corresponding benzoxazolinones, 6-methoxy-2-benzoxazolinone (MBOA) and 2-benzoxazolinone (BOA), respectively. The first step in the detoxification of benzoxazolinones involves the hydrolysis of the cyclic ester bond of benzoxazolinones by the FDB1 cluster gamma-lactamase MBL1 to aminophenols. MBL1 is able to convert BOA into 2-aminophenol (2-AP), as well as MBOA into 5-methoxy-2-aminophenol (2-AMP). The FDB2 cluster N-malonyltransferase FDB2/NAT1 then metabolizes aminophenols via N-malonylation to non-toxic malonamic acids. FDB2/NAT1 converts 2-AP into N-(2-hydroxyphenyl) malonamic acid (HPMA) and 2-AMP into N-(2-hydroxy-4-methoxyphenyl) malonamic acid (HMPMA). The duplicated dienlactone hydrolases DLH1 and DLH2 may provide redundant function for hydrolyzing the lactone moiety in the BOA molecule. The roles of the amidases an other enzymes encoded by the 2 FDB clusters have not been identified so far. This is Acyl-CoA transferase FVEG_12629 from Gibberella moniliformis (strain M3125 / FGSC 7600) (Maize ear and stalk rot fungus).